A 333-amino-acid chain; its full sequence is Replication factor C subunit 2 (333 aa).

Ala-2 carries the N-acetylalanine modification. 55–62 (GPPGTGKT) contributes to the ATP binding site.

The protein belongs to the activator 1 small subunits family. As to quaternary structure, heterotetramer of subunits RFC2, RFC3, RFC4 and RFC5 that can form a complex with RFC1.

It localises to the nucleus. Its function is as follows. May be involved in DNA replication and thus regulate cell proliferation. In Arabidopsis thaliana (Mouse-ear cress), this protein is Replication factor C subunit 2 (RFC2).